The chain runs to 1134 residues: Mediator of RNA polymerase II transcription subunit 12 (1134 aa).

It belongs to the Mediator complex subunit 12 family. As to quaternary structure, component of the srb8-11 complex which consists of rb8, srb9(TRAP240), srb10 and srb11. The srb8-11 complex associates with the Mediator complex thereby blocking association with RNA polymerase II and leading to reduced transcriptional activation by Mediator.

The protein localises to the nucleus. In terms of biological role, component of the srb8-11 complex. The srb8-11 complex is a regulatory module of the Mediator complex which is itself involved in regulation of basal and activated RNA polymerase II-dependent transcription. The srb8-11 complex may be involved in the transcriptional repression of a subset of genes regulated by Mediator. It may inhibit the association of the Mediator complex with RNA polymerase II to form the holoenzyme complex. This Schizosaccharomyces pombe (strain 972 / ATCC 24843) (Fission yeast) protein is Mediator of RNA polymerase II transcription subunit 12 (srb8).